The following is a 155-amino-acid chain: MPHPLLPELEQLTQRVAGLQGFELCGIQLLTHMNPITLQVQIRHTSGSDVNLDDCAGFSGVLGEALEESQQLVEAYVLEISSPGIGEQLSCDRDFQTFRGFPVDVTHRDQGNVEHRLEGLLHERNTDSLQINIRGRIKSIPRDQVIEVRLTTPGQ.

It belongs to the RimP family.

It localises to the cytoplasm. Its function is as follows. Required for maturation of 30S ribosomal subunits. In Synechococcus sp. (strain CC9902), this protein is Ribosome maturation factor RimP.